A 583-amino-acid chain; its full sequence is Lipoprotein LpqB (583 aa).

The N-terminal stretch at 1-29 is a signal peptide; sequence MSNKTTEATKTTKVKKVLSVVAGLGLLAG. Residue C30 is the site of N-palmitoyl cysteine attachment. C30 is lipidated: S-diacylglycerol cysteine. Positions 38–63 are disordered; the sequence is NPEAISSYAPAPSGQEAPTPTDGQPS.

It belongs to the LpqB lipoprotein family.

The protein resides in the cell membrane. The protein is Lipoprotein LpqB of Corynebacterium jeikeium (strain K411).